The primary structure comprises 330 residues: 5'-AMP-activated protein kinase subunit gamma-1 (330 aa).

The segment at 1 to 24 (MEAVPSSDSYPAVENEHLQETPES) is disordered. CBS domains are found at residues 43–103 (PTSS…KSAL), 125–187 (SFKP…PKPE), and 198–260 (IGTY…NLDV). ADP is bound by residues R70, 85–90 (MLTITD), V130, 151–152 (HR), and K170. AMP contacts are provided by residues R70, 85–90 (MLTITD), V130, H151, 151–152 (HR), K170, T200, A205, 226–227 (SA), and 242–245 (SKFD). Residues R70, 85 to 90 (MLTITD), V130, 151 to 152 (HR), R152, and K170 each bind ATP. The AMPK pseudosubstrate signature appears at 138-159 (LFDAVSSLIRNKIHRLPVIDPE). 242–245 (SKFD) is an ADP binding site. 242-245 (SKFD) provides a ligand contact to ATP. S261 bears the Phosphoserine; by ULK1 mark. T263 is modified (phosphothreonine; by ULK1). R269 contacts ADP. R269 lines the AMP pocket. R269 lines the ATP pocket. S270 carries the post-translational modification Phosphoserine; by ULK1. The CBS 4 domain occupies 272–329 (YFEGVLKCYLHETLETIINRLVEAEVHRLVVVDENDVVKGIVSLSDILQALVLTGGEK). ADP-binding positions include L277 and 298-299 (HR). Residues L277, H298, 298 to 299 (HR), and 314 to 317 (SLSD) each bind AMP. ATP-binding positions include L277 and 298–299 (HR).

The protein belongs to the 5'-AMP-activated protein kinase gamma subunit family. In terms of assembly, AMPK is a heterotrimer of an alpha catalytic subunit (PRKAA1 or PRKAA2), a beta (PRKAB1 or PRKAB2) and a gamma non-catalytic subunits (PRKAG1, PRKAG2 or PRKAG3). Interacts with FNIP1 and FNIP2. Post-translationally, phosphorylated by ULK1 and ULK2; leading to negatively regulate AMPK activity and suggesting the existence of a regulatory feedback loop between ULK1, ULK2 and AMPK. Glycosylated; O-GlcNAcylated by OGT, promoting the AMP-activated protein kinase (AMPK) activity.

Functionally, AMP/ATP-binding subunit of AMP-activated protein kinase (AMPK), an energy sensor protein kinase that plays a key role in regulating cellular energy metabolism. In response to reduction of intracellular ATP levels, AMPK activates energy-producing pathways and inhibits energy-consuming processes: inhibits protein, carbohydrate and lipid biosynthesis, as well as cell growth and proliferation. AMPK acts via direct phosphorylation of metabolic enzymes, and by longer-term effects via phosphorylation of transcription regulators. Also acts as a regulator of cellular polarity by remodeling the actin cytoskeleton; probably by indirectly activating myosin. Gamma non-catalytic subunit mediates binding to AMP, ADP and ATP, leading to activate or inhibit AMPK: AMP-binding results in allosteric activation of alpha catalytic subunit (PRKAA1 or PRKAA2) both by inducing phosphorylation and preventing dephosphorylation of catalytic subunits. ADP also stimulates phosphorylation, without stimulating already phosphorylated catalytic subunit. ATP promotes dephosphorylation of catalytic subunit, rendering the AMPK enzyme inactive. The protein is 5'-AMP-activated protein kinase subunit gamma-1 (PRKAG1) of Bos taurus (Bovine).